Here is a 167-residue protein sequence, read N- to C-terminus: Regulatory protein RecX (167 aa).

The tract at residues 19–49 (ESELRRKLASQPFSAKGHWGKQTGRSDNEPV) is disordered.

The protein belongs to the RecX family.

It is found in the cytoplasm. Modulates RecA activity. The sequence is that of Regulatory protein RecX from Yersinia enterocolitica serotype O:8 / biotype 1B (strain NCTC 13174 / 8081).